The chain runs to 308 residues: MFIKVLGSAAGGGFPQWNCNCANCQGLRDGTIQAAPRTQSSIIVSDNGKEWVLCNASPDISQQIAHTPELNKAGVLRGTHIGGIILTDSQIDHTTGLLSLREGCPHQVWCTPEVHEDLSTGFPVFTMLRHWNGGLVHHPIAPQQPFTVDACPDLQFTAVPIASNAPPYSPYRDRPLPGHNVALFIENRRNGQTLFYAPGLGEPDEALLPWLQKADCLLIDGTVWQDDELQAAGVGRNTGRDMGHLALGDEHGMMALLASLPAKRKILIHINNTNPILNEQSPQRQALTQQGIEVSWDGMAITLQDTAC.

Belongs to the PqqB family.

It participates in cofactor biosynthesis; pyrroloquinoline quinone biosynthesis. May be involved in the transport of PQQ or its precursor to the periplasm. The sequence is that of Coenzyme PQQ synthesis protein B from Klebsiella pneumoniae subsp. pneumoniae (strain ATCC 700721 / MGH 78578).